The sequence spans 575 residues: Golgi-associated kinase 1A (575 aa).

A signal peptide spans 1-29 (MASWLRRKLRGKRRPVIAFCLLMILSAMA). Positions 30 to 119 (VTRFPPQRPS…GDLRHPGRVR (90 aa)) are cleaved as a propeptide — removed in mature form. The O-glycosylated at one site stretch occupies residues 53–58 (TGAPAT). Over residues 143-153 (VGDPGTKDLGH) the composition is skewed to basic and acidic residues. A disordered region spans residues 143–162 (VGDPGTKDLGHPQHGSPIQE). A propeptide spans 437–575 (RYCCGFEPEP…NLTLFRDEDP (139 aa)) (removed in mature form). Residue asparagine 566 is glycosylated (N-linked (GlcNAc...) asparagine).

It belongs to the GASK family. In terms of processing, O-glycosylated with core 1 or possibly core 8 glycans. Post-translationally, proteolytically cleaved. Cleaved at Arg-120 and Arg-437 leading to a processed mature product of 35 kDa. The cleavage takes place in the Golgi apparatus. Expressed in skin, lung and colon (at protein level).

Its subcellular location is the secreted. The protein localises to the endoplasmic reticulum. It is found in the golgi apparatus. It localises to the membrane. The protein resides in the caveola. This Homo sapiens (Human) protein is Golgi-associated kinase 1A.